We begin with the raw amino-acid sequence, 262 residues long: MAGTTAEYISHHLSFLASGDGFWAVHLDTLFFSLLAGVIFLFVFSRVAKNATSGVPGKLQCFVEIVIGWVDGLVKDNFHGPRNVIAPLALTIFCWVFIMNAIDLVPVDFLPQLANMFGIHYLRAVPTADISATLGMSICVFFLILFYTVKSKGFGGLVKEYTLHPFNHWVFIPVNFILETVTLLAKPISLAFRLFGNMYAGELIFILIAVMYMADNFALQALGIPLHLVWAIFHILVITLQAFIFMMLTIVYLSIAYNKADH.

A run of 6 helical transmembrane segments spans residues 24 to 44, 84 to 104, 129 to 149, 165 to 185, 194 to 214, and 228 to 248; these read AVHLDTLFFSLLAGVIFLFVF, VIAPLALTIFCWVFIMNAIDL, DISATLGMSICVFFLILFYTV, PFNHWVFIPVNFILETVTLLA, LFGNMYAGELIFILIAVMYMA, and LVWAIFHILVITLQAFIFMML.

Belongs to the ATPase A chain family. As to quaternary structure, F-type ATPases have 2 components, CF(1) - the catalytic core - and CF(0) - the membrane proton channel. CF(1) has five subunits: alpha(3), beta(3), gamma(1), delta(1), epsilon(1). CF(0) has three main subunits: a(1), b(2) and c(9-12). The alpha and beta chains form an alternating ring which encloses part of the gamma chain. CF(1) is attached to CF(0) by a central stalk formed by the gamma and epsilon chains, while a peripheral stalk is formed by the delta and b chains.

The protein localises to the cell inner membrane. Functionally, key component of the proton channel; it plays a direct role in the translocation of protons across the membrane. The polypeptide is ATP synthase subunit a (Actinobacillus pleuropneumoniae serotype 7 (strain AP76)).